A 347-amino-acid polypeptide reads, in one-letter code: D-alanine--D-alanine ligase (347 aa).

Residues 134–332 (KLYAKDLGVK…LAQSLPKTPK (199 aa)) enclose the ATP-grasp domain. An ATP-binding site is contributed by 161 to 216 (LIGFNFPFIIKPSNAGSSLGVSVVKEEKELIYALDGAFEYSKEILIEPFIQGVKEY). Mg(2+)-binding residues include D288, E300, and N302.

It belongs to the D-alanine--D-alanine ligase family. Requires Mg(2+) as cofactor. Mn(2+) serves as cofactor.

The protein resides in the cytoplasm. The enzyme catalyses 2 D-alanine + ATP = D-alanyl-D-alanine + ADP + phosphate + H(+). It participates in cell wall biogenesis; peptidoglycan biosynthesis. Cell wall formation. This Helicobacter pylori (strain Shi470) protein is D-alanine--D-alanine ligase.